A 178-amino-acid polypeptide reads, in one-letter code: Phosphopantetheine adenylyltransferase (178 aa).

Thr-17 provides a ligand contact to substrate. ATP is bound by residues 17–18 (TF) and His-25. Substrate is bound by residues Lys-49, Leu-86, and Arg-100. ATP-binding positions include 101–103 (GLR), Glu-111, and 136–142 (LQPVASR).

This sequence belongs to the bacterial CoaD family. Homohexamer. Mg(2+) serves as cofactor.

It is found in the cytoplasm. It carries out the reaction (R)-4'-phosphopantetheine + ATP + H(+) = 3'-dephospho-CoA + diphosphate. It functions in the pathway cofactor biosynthesis; coenzyme A biosynthesis; CoA from (R)-pantothenate: step 4/5. In terms of biological role, reversibly transfers an adenylyl group from ATP to 4'-phosphopantetheine, yielding dephospho-CoA (dPCoA) and pyrophosphate. This chain is Phosphopantetheine adenylyltransferase, found in Zymomonas mobilis subsp. mobilis (strain ATCC 31821 / ZM4 / CP4).